Here is a 332-residue protein sequence, read N- to C-terminus: Beta-ketoacyl-[acyl-carrier-protein] synthase III (332 aa).

Catalysis depends on residues Cys-116 and His-257. The ACP-binding stretch occupies residues Gln-258–Arg-262. Asn-287 is an active-site residue.

Belongs to the thiolase-like superfamily. FabH family. In terms of assembly, homodimer.

It localises to the cytoplasm. It carries out the reaction malonyl-[ACP] + acetyl-CoA + H(+) = 3-oxobutanoyl-[ACP] + CO2 + CoA. It participates in lipid metabolism; fatty acid biosynthesis. Catalyzes the condensation reaction of fatty acid synthesis by the addition to an acyl acceptor of two carbons from malonyl-ACP. Catalyzes the first condensation reaction which initiates fatty acid synthesis and may therefore play a role in governing the total rate of fatty acid production. Possesses both acetoacetyl-ACP synthase and acetyl transacylase activities. Its substrate specificity determines the biosynthesis of branched-chain and/or straight-chain of fatty acids. The sequence is that of Beta-ketoacyl-[acyl-carrier-protein] synthase III from Acaryochloris marina (strain MBIC 11017).